Reading from the N-terminus, the 312-residue chain is Isoflavone reductase homolog (312 aa).

NADP(+) contacts are provided by residues 10–16 (GGTGYVG), Arg35, and Lys44. The Proton acceptor role is filled by Lys138. An NADP(+)-binding site is contributed by Arg142. His270 provides a ligand contact to substrate.

Belongs to the NmrA-type oxidoreductase family. Isoflavone reductase subfamily.

The chain is Isoflavone reductase homolog from Lupinus albus (White lupine).